The sequence spans 536 residues: CTP synthase (536 aa).

The interval 1 to 267 is amidoligase domain; that stretch reads MTKFIFVTGG…DDIVIKRLEL (267 aa). Ser13 lines the CTP pocket. Ser13 provides a ligand contact to UTP. 14–19 is an ATP binding site; that stretch reads SLGKGI. Tyr54 contacts L-glutamine. Asp71 contributes to the ATP binding site. Residues Asp71 and Glu141 each coordinate Mg(2+). Residues 148-150, 188-193, and Lys224 each bind CTP; these read DIE and KTKPTQ. UTP is bound by residues 188 to 193 and Lys224; that span reads KTKPTQ. 240–242 is an ATP binding site; the sequence is RDA. The region spanning 293-535 is the Glutamine amidotransferase type-1 domain; that stretch reads TIGLVGKYVS…IEASLNHQQS (243 aa). L-glutamine is bound at residue Gly355. Cys382 functions as the Nucleophile; for glutamine hydrolysis in the catalytic mechanism. Residues 383–386, Glu406, and Arg463 contribute to the L-glutamine site; that span reads LGMQ. Residues His508 and Glu510 contribute to the active site.

Belongs to the CTP synthase family. In terms of assembly, homotetramer.

It carries out the reaction UTP + L-glutamine + ATP + H2O = CTP + L-glutamate + ADP + phosphate + 2 H(+). The catalysed reaction is L-glutamine + H2O = L-glutamate + NH4(+). It catalyses the reaction UTP + NH4(+) + ATP = CTP + ADP + phosphate + 2 H(+). It functions in the pathway pyrimidine metabolism; CTP biosynthesis via de novo pathway; CTP from UDP: step 2/2. With respect to regulation, allosterically activated by GTP, when glutamine is the substrate; GTP has no effect on the reaction when ammonia is the substrate. The allosteric effector GTP functions by stabilizing the protein conformation that binds the tetrahedral intermediate(s) formed during glutamine hydrolysis. Inhibited by the product CTP, via allosteric rather than competitive inhibition. Catalyzes the ATP-dependent amination of UTP to CTP with either L-glutamine or ammonia as the source of nitrogen. Regulates intracellular CTP levels through interactions with the four ribonucleotide triphosphates. This Staphylococcus saprophyticus subsp. saprophyticus (strain ATCC 15305 / DSM 20229 / NCIMB 8711 / NCTC 7292 / S-41) protein is CTP synthase.